A 354-amino-acid chain; its full sequence is MMVDNQTPDSSTLSTASTPVYAEPQLTEELLERFDSFAQKVARHDGVSAFSEQTRIELSKALRESTLTPPRFFVAEDNGTLAAVFVALTPANDEDTGVIEAAVAPEYRGQGVGSAFFDHAVRQLGDDATRYRLWVHGSATDTGIESPAHAFATLHGFEPVRVLYKMVLPLDAQTREELVERSDARTLPENLRMRTFTGADEFPWLRVNAAAFAHHPEQGKLTLADLRERTGSPWFRPEGFFIASEVEDDSAIAAFTWTKIPTGQEQSELSPSGEIYVVGVNPQAQGGGLGRTLTLRALAYLACAEDENGEPLRAIDLYVDADNTAAYSLYTSLGFGVATVDRMYAPAQQDEPAA.

The segment covering 1–18 (MMVDNQTPDSSTLSTAST) has biased composition (polar residues). A disordered region spans residues 1–21 (MMVDNQTPDSSTLSTASTPVY). N-acetyltransferase domains follow at residues 21-176 (YAEP…QTRE) and 191-354 (LRMR…EPAA). 1D-myo-inositol 2-(L-cysteinylamino)-2-deoxy-alpha-D-glucopyranoside is bound at residue E52. 101–103 (AAV) contributes to the acetyl-CoA binding site. 1D-myo-inositol 2-(L-cysteinylamino)-2-deoxy-alpha-D-glucopyranoside-binding residues include E217, K259, and E274. Acetyl-CoA contacts are provided by residues 278-280 (VGV) and 285-291 (QGGGLGR). Y318 provides a ligand contact to 1D-myo-inositol 2-(L-cysteinylamino)-2-deoxy-alpha-D-glucopyranoside.

This sequence belongs to the acetyltransferase family. MshD subfamily. Monomer.

It catalyses the reaction 1D-myo-inositol 2-(L-cysteinylamino)-2-deoxy-alpha-D-glucopyranoside + acetyl-CoA = mycothiol + CoA + H(+). Its function is as follows. Catalyzes the transfer of acetyl from acetyl-CoA to desacetylmycothiol (Cys-GlcN-Ins) to form mycothiol. The protein is Mycothiol acetyltransferase of Rothia mucilaginosa (strain DY-18) (Stomatococcus mucilaginosus).